A 467-amino-acid chain; its full sequence is Sexual differentiation process putative subtilase-type proteinase isp6 (467 aa).

Residues 86–176 enclose the Inhibitor I9 domain; sequence YIIVLQPDLS…AVERDQVVSI (91 aa). Positions 186-467 constitute a Peptidase S8 domain; the sequence is PWGLARISHK…NLLAFNGAQE (282 aa). Active-site charge relay system residues include Asp-221, His-253, and Ser-409.

The protein belongs to the peptidase S8 family.

The chain is Sexual differentiation process putative subtilase-type proteinase isp6 (isp6) from Schizosaccharomyces pombe (strain 972 / ATCC 24843) (Fission yeast).